The sequence spans 128 residues: Small ribosomal subunit protein eS8 (128 aa).

The segment at 1–41 (MSYYQGNDSRKITGGQKGKNRDKRKYELGSPPTETKISDKD) is disordered.

The protein belongs to the eukaryotic ribosomal protein eS8 family. Part of the 30S ribosomal subunit.

In Sulfolobus acidocaldarius (strain ATCC 33909 / DSM 639 / JCM 8929 / NBRC 15157 / NCIMB 11770), this protein is Small ribosomal subunit protein eS8.